The following is a 220-amino-acid chain: RING-H2 finger protein ATL77 (220 aa).

A helical membrane pass occupies residues 53 to 73; it reads LMLLSILLCGIICSLGLHYII. The RING-type; atypical zinc-finger motif lies at 130–172; sequence CVICLSDFVAGEQLRVLPKCNHGFHLRCIDKWLTQHMTCPKCR.

Belongs to the RING-type zinc finger family. ATL subfamily.

It is found in the membrane. It carries out the reaction S-ubiquitinyl-[E2 ubiquitin-conjugating enzyme]-L-cysteine + [acceptor protein]-L-lysine = [E2 ubiquitin-conjugating enzyme]-L-cysteine + N(6)-ubiquitinyl-[acceptor protein]-L-lysine.. It functions in the pathway protein modification; protein ubiquitination. The sequence is that of RING-H2 finger protein ATL77 (ATL77) from Arabidopsis thaliana (Mouse-ear cress).